A 283-amino-acid polypeptide reads, in one-letter code: MTEIRRLRILITNDDGIKAKGISLLISLLREADFADLYIVAPLEEQSGRSMAFSLVEPTTLEPFDYPQRVQEAWAVTGTPVDCVKLAIGELFKENALDLILSGINNGKNSGRCLYYSATVGAIREANLHGIPAIALSQSENIAFFQEAHMASLIRSLCEFTVAYKHTDPLGLNVNFPASTDDSPWKGIRFTLSGNEFLFGIPRLVRTEGNRRYYTLYDMRDKVSEEFSEEYLALANNYISAAPLVSKNTPRATLSEEELAFLKDSFEQSVLWKASLNLEEDLA.

Residues Asp-14, Asp-15, Ser-47, and Asn-105 each contribute to the a divalent metal cation site.

It belongs to the SurE nucleotidase family. It depends on a divalent metal cation as a cofactor.

The protein resides in the cytoplasm. It carries out the reaction a ribonucleoside 5'-phosphate + H2O = a ribonucleoside + phosphate. Nucleotidase that shows phosphatase activity on nucleoside 5'-monophosphates. This is 5'-nucleotidase SurE from Chlamydia trachomatis serovar A (strain ATCC VR-571B / DSM 19440 / HAR-13).